The following is a 349-amino-acid chain: Small ribosomal subunit protein uS2 (349 aa).

It belongs to the universal ribosomal protein uS2 family.

This chain is Small ribosomal subunit protein uS2, found in Methylobacterium sp. (strain 4-46).